The sequence spans 158 residues: 2-C-methyl-D-erythritol 2,4-cyclodiphosphate synthase (158 aa).

Residues aspartate 9 and histidine 11 each contribute to the a divalent metal cation site. Residues 9 to 11 and 35 to 36 contribute to the 4-CDP-2-C-methyl-D-erythritol 2-phosphate site; these read DVH and HS. Histidine 43 contributes to the a divalent metal cation binding site. Residues 57–59, 62–66, 101–107, 133–136, phenylalanine 140, and arginine 143 contribute to the 4-CDP-2-C-methyl-D-erythritol 2-phosphate site; these read DIG, FPDTD, AQAPKMA, and TTTE.

Belongs to the IspF family. In terms of assembly, homotrimer. A divalent metal cation serves as cofactor.

It carries out the reaction 4-CDP-2-C-methyl-D-erythritol 2-phosphate = 2-C-methyl-D-erythritol 2,4-cyclic diphosphate + CMP. It functions in the pathway isoprenoid biosynthesis; isopentenyl diphosphate biosynthesis via DXP pathway; isopentenyl diphosphate from 1-deoxy-D-xylulose 5-phosphate: step 4/6. Functionally, involved in the biosynthesis of isopentenyl diphosphate (IPP) and dimethylallyl diphosphate (DMAPP), two major building blocks of isoprenoid compounds. Catalyzes the conversion of 4-diphosphocytidyl-2-C-methyl-D-erythritol 2-phosphate (CDP-ME2P) to 2-C-methyl-D-erythritol 2,4-cyclodiphosphate (ME-CPP) with a corresponding release of cytidine 5-monophosphate (CMP). The chain is 2-C-methyl-D-erythritol 2,4-cyclodiphosphate synthase from Vibrio vulnificus (strain CMCP6).